Consider the following 106-residue polypeptide: Acidic phospholipase A2 PhTX-III (106 aa).

Residues Tyr23, Gly25, and Gly27 each contribute to the Ca(2+) site. Intrachain disulfides connect Cys24/Cys40, Cys39/Cys75, Cys45/Cys106, Cys46/Cys68, and Cys55/Cys66. The active site involves His43. Asp44 contributes to the Ca(2+) binding site. Asp69 is an active-site residue.

Ca(2+) serves as cofactor. As to expression, expressed by the venom gland.

It localises to the secreted. It carries out the reaction a 1,2-diacyl-sn-glycero-3-phosphocholine + H2O = a 1-acyl-sn-glycero-3-phosphocholine + a fatty acid + H(+). Partially inhibited by magnesium ions and completely inhibited by zinc ions These divalent cations may act as competitive antagonists of the cofactor. In terms of biological role, snake venom phospholipase A2 (PLA2) that induces inflammatory response, with local edema and release of cytokines IL-1 alpha, IL-6 and TNF-alpha. Does not exhibit myotoxic, anticoagulant and antibacterial effects. Release of pro-inflammatory cytokines may be due to mast cell degranulation, and edema may be induced by arachidonic acid that results from the PLA2 catalytic activity. PLA2 catalyzes the calcium-dependent hydrolysis of the 2-acyl groups in 3-sn-phosphoglycerides. The protein is Acidic phospholipase A2 PhTX-III of Bothrocophias hyoprora (Amazonian hognose viper).